Consider the following 295-residue polypeptide: Pyridoxal 5'-phosphate synthase subunit PdxS (295 aa).

Residue Asp-25 participates in D-ribose 5-phosphate binding. Catalysis depends on Lys-82, which acts as the Schiff-base intermediate with D-ribose 5-phosphate. Position 154 (Gly-154) interacts with D-ribose 5-phosphate. Residue Arg-166 participates in D-glyceraldehyde 3-phosphate binding. D-ribose 5-phosphate-binding positions include Gly-215 and 236–237; that span reads GS.

This sequence belongs to the PdxS/SNZ family. In terms of assembly, in the presence of PdxT, forms a dodecamer of heterodimers.

It carries out the reaction aldehydo-D-ribose 5-phosphate + D-glyceraldehyde 3-phosphate + L-glutamine = pyridoxal 5'-phosphate + L-glutamate + phosphate + 3 H2O + H(+). It participates in cofactor biosynthesis; pyridoxal 5'-phosphate biosynthesis. Catalyzes the formation of pyridoxal 5'-phosphate from ribose 5-phosphate (RBP), glyceraldehyde 3-phosphate (G3P) and ammonia. The ammonia is provided by the PdxT subunit. Can also use ribulose 5-phosphate and dihydroxyacetone phosphate as substrates, resulting from enzyme-catalyzed isomerization of RBP and G3P, respectively. The chain is Pyridoxal 5'-phosphate synthase subunit PdxS from Staphylococcus epidermidis (strain ATCC 35984 / DSM 28319 / BCRC 17069 / CCUG 31568 / BM 3577 / RP62A).